A 486-amino-acid chain; its full sequence is Cephamycin export protein CmcT (486 aa).

The next 14 helical transmembrane spans lie at 24 to 44, 56 to 76, 88 to 108, 121 to 141, 153 to 173, 178 to 198, 210 to 230, 241 to 261, 284 to 304, 317 to 337, 345 to 365, 369 to 389, 418 to 438, and 450 to 470; these read VLAC…TVAL, ASLQ…LLFG, VFLG…LATS, AGAA…FAEG, AVAL…TEFL, VLLV…RVLA, LDLP…LGVS, AVAV…VVEA, LAML…TLSM, LGFV…VPWL, VLIA…SLLT, AYLG…GLVG, FGGA…TSGS, and FVGI…LPAL.

This sequence belongs to the major facilitator superfamily.

The protein localises to the cell membrane. Functionally, involved in cephamycin export. This is Cephamycin export protein CmcT (cmcT) from Amycolatopsis lactamdurans (Nocardia lactamdurans).